Consider the following 231-residue polypeptide: Large ribosomal subunit protein uL1 (231 aa).

Belongs to the universal ribosomal protein uL1 family. As to quaternary structure, part of the 50S ribosomal subunit.

Binds directly to 23S rRNA. The L1 stalk is quite mobile in the ribosome, and is involved in E site tRNA release. Its function is as follows. Protein L1 is also a translational repressor protein, it controls the translation of the L11 operon by binding to its mRNA. In Herminiimonas arsenicoxydans, this protein is Large ribosomal subunit protein uL1.